We begin with the raw amino-acid sequence, 706 residues long: Dihydroxyacetone synthase (706 aa).

Thiamine diphosphate contacts are provided by residues His-76 and 126–128 (GPL). Residues Asp-167, Asn-197, and Val-199 each coordinate Mg(2+). Asn-197 provides a ligand contact to thiamine diphosphate. 3 residues coordinate thiamine diphosphate: His-273, Glu-431, and Phe-459. Glu-431 (proton donor) is an active-site residue. A Microbody targeting signal motif is present at residues 704 to 706 (NHL).

This sequence belongs to the transketolase family. Requires Mg(2+) as cofactor. Ca(2+) is required as a cofactor. The cofactor is Mn(2+). It depends on Co(2+) as a cofactor. Thiamine diphosphate serves as cofactor.

It is found in the peroxisome. The catalysed reaction is D-xylulose 5-phosphate + formaldehyde = dihydroxyacetone + D-glyceraldehyde 3-phosphate. Involved in assimilation of formaldehyde. This Candida boidinii (Yeast) protein is Dihydroxyacetone synthase (DAS1).